The following is a 179-amino-acid chain: Large ribosomal subunit protein uL5 (179 aa).

Belongs to the universal ribosomal protein uL5 family. In terms of assembly, part of the 50S ribosomal subunit; part of the 5S rRNA/L5/L18/L25 subcomplex. Contacts the 5S rRNA and the P site tRNA. Forms a bridge to the 30S subunit in the 70S ribosome.

Its function is as follows. This is one of the proteins that bind and probably mediate the attachment of the 5S RNA into the large ribosomal subunit, where it forms part of the central protuberance. In the 70S ribosome it contacts protein S13 of the 30S subunit (bridge B1b), connecting the 2 subunits; this bridge is implicated in subunit movement. Contacts the P site tRNA; the 5S rRNA and some of its associated proteins might help stabilize positioning of ribosome-bound tRNAs. The sequence is that of Large ribosomal subunit protein uL5 from Sodalis glossinidius (strain morsitans).